We begin with the raw amino-acid sequence, 140 residues long: Large ribosomal subunit protein uL11 (140 aa).

Belongs to the universal ribosomal protein uL11 family. Part of the ribosomal stalk of the 50S ribosomal subunit. Interacts with L10 and the large rRNA to form the base of the stalk. L10 forms an elongated spine to which L12 dimers bind in a sequential fashion forming a multimeric L10(L12)X complex. One or more lysine residues are methylated.

In terms of biological role, forms part of the ribosomal stalk which helps the ribosome interact with GTP-bound translation factors. This is Large ribosomal subunit protein uL11 from Dehalococcoides mccartyi (strain CBDB1).